The following is an 87-amino-acid chain: Costars family protein (87 aa).

The protein belongs to the costars family.

This is Costars family protein from Oryza sativa subsp. indica (Rice).